Consider the following 83-residue polypeptide: Large ribosomal subunit protein eL43 (83 aa).

Cys38, Cys41, Cys56, and Cys59 together coordinate Zn(2+). The segment at 38 to 59 (CPVCGRKAVKRISTGIWQCQKC) adopts a C4-type zinc-finger fold.

It belongs to the eukaryotic ribosomal protein eL43 family. Putative zinc-binding subfamily. Part of the 50S ribosomal subunit. Zn(2+) is required as a cofactor.

In terms of biological role, binds to the 23S rRNA. The polypeptide is Large ribosomal subunit protein eL43 (Pyrococcus furiosus (strain ATCC 43587 / DSM 3638 / JCM 8422 / Vc1)).